The primary structure comprises 345 residues: Phosphoribosylformylglycinamidine cyclo-ligase (345 aa).

It belongs to the AIR synthase family.

The protein resides in the cytoplasm. It carries out the reaction 2-formamido-N(1)-(5-O-phospho-beta-D-ribosyl)acetamidine + ATP = 5-amino-1-(5-phospho-beta-D-ribosyl)imidazole + ADP + phosphate + H(+). It functions in the pathway purine metabolism; IMP biosynthesis via de novo pathway; 5-amino-1-(5-phospho-D-ribosyl)imidazole from N(2)-formyl-N(1)-(5-phospho-D-ribosyl)glycinamide: step 2/2. In Salmonella typhimurium (strain LT2 / SGSC1412 / ATCC 700720), this protein is Phosphoribosylformylglycinamidine cyclo-ligase.